The sequence spans 219 residues: Small ribosomal subunit protein uS3 (219 aa).

Residues 38–106 (IREYIENRLK…RVHINIFEVK (69 aa)) enclose the KH type-2 domain.

The protein belongs to the universal ribosomal protein uS3 family. As to quaternary structure, part of the 30S ribosomal subunit. Forms a tight complex with proteins S10 and S14.

Functionally, binds the lower part of the 30S subunit head. Binds mRNA in the 70S ribosome, positioning it for translation. This is Small ribosomal subunit protein uS3 from Halalkalibacterium halodurans (strain ATCC BAA-125 / DSM 18197 / FERM 7344 / JCM 9153 / C-125) (Bacillus halodurans).